A 229-amino-acid polypeptide reads, in one-letter code: Large ribosomal subunit protein uL1 (229 aa).

The protein belongs to the universal ribosomal protein uL1 family. In terms of assembly, part of the 50S ribosomal subunit.

Functionally, binds directly to 23S rRNA. The L1 stalk is quite mobile in the ribosome, and is involved in E site tRNA release. In terms of biological role, protein L1 is also a translational repressor protein, it controls the translation of the L11 operon by binding to its mRNA. In Rhodopseudomonas palustris (strain HaA2), this protein is Large ribosomal subunit protein uL1.